Reading from the N-terminus, the 372-residue chain is Chaperone protein DnaJ (372 aa).

Residues 5–69 (DYYEVLGVDR…QKKARYDQFG (65 aa)) enclose the J domain. The CR-type zinc-finger motif lies at 129–211 (GKETEIEIPR…CSGKGKVRKR (83 aa)). Residues C142, C145, C159, C162, C185, C188, C199, and C202 each coordinate Zn(2+). CXXCXGXG motif repeat units lie at residues 142–149 (CGTCHGSG), 159–166 (CSHCGGSG), 185–192 (CNYCEGTG), and 199–206 (CATCSGKG).

Belongs to the DnaJ family. In terms of assembly, homodimer. The cofactor is Zn(2+).

It localises to the cytoplasm. Its function is as follows. Participates actively in the response to hyperosmotic and heat shock by preventing the aggregation of stress-denatured proteins and by disaggregating proteins, also in an autonomous, DnaK-independent fashion. Unfolded proteins bind initially to DnaJ; upon interaction with the DnaJ-bound protein, DnaK hydrolyzes its bound ATP, resulting in the formation of a stable complex. GrpE releases ADP from DnaK; ATP binding to DnaK triggers the release of the substrate protein, thus completing the reaction cycle. Several rounds of ATP-dependent interactions between DnaJ, DnaK and GrpE are required for fully efficient folding. Also involved, together with DnaK and GrpE, in the DNA replication of plasmids through activation of initiation proteins. This is Chaperone protein DnaJ from Shouchella clausii (strain KSM-K16) (Alkalihalobacillus clausii).